A 189-amino-acid polypeptide reads, in one-letter code: Small ribosomal subunit protein uS5 (189 aa).

An S5 DRBM domain is found at 23-86 (FIDKLVHINR…ESAKREMIYV (64 aa)).

Belongs to the universal ribosomal protein uS5 family. As to quaternary structure, part of the 30S ribosomal subunit. Contacts proteins S4 and S8.

Functionally, with S4 and S12 plays an important role in translational accuracy. In terms of biological role, located at the back of the 30S subunit body where it stabilizes the conformation of the head with respect to the body. The protein is Small ribosomal subunit protein uS5 of Bartonella bacilliformis (strain ATCC 35685 / KC583 / Herrer 020/F12,63).